A 199-amino-acid polypeptide reads, in one-letter code: GTP cyclohydrolase 1 (199 aa).

Zn(2+) contacts are provided by Cys-89, His-92, and Cys-161.

Belongs to the GTP cyclohydrolase I family. As to quaternary structure, homomer.

The enzyme catalyses GTP + H2O = 7,8-dihydroneopterin 3'-triphosphate + formate + H(+). Its pathway is cofactor biosynthesis; 7,8-dihydroneopterin triphosphate biosynthesis; 7,8-dihydroneopterin triphosphate from GTP: step 1/1. The polypeptide is GTP cyclohydrolase 1 (Bifidobacterium longum (strain DJO10A)).